Consider the following 168-residue polypeptide: Photosystem I assembly protein Ycf3 (168 aa).

TPR repeat units follow at residues alanine 35–proline 68, serine 72–leucine 105, and glycine 120–asparagine 153.

The protein belongs to the Ycf3 family.

The protein resides in the plastid membrane. Essential for the assembly of the photosystem I (PSI) complex. May act as a chaperone-like factor to guide the assembly of the PSI subunits. The polypeptide is Photosystem I assembly protein Ycf3 (Cuscuta reflexa (Southern Asian dodder)).